A 247-amino-acid chain; its full sequence is UPF0612 protein P20C8.01c (247 aa).

2 coiled-coil regions span residues 27–63 (IKRY…MKYE) and 138–225 (DTVQ…DARS).

Belongs to the UPF0612 family.

The protein localises to the cytoplasm. The sequence is that of UPF0612 protein P20C8.01c from Schizosaccharomyces pombe (strain 972 / ATCC 24843) (Fission yeast).